Here is a 379-residue protein sequence, read N- to C-terminus: Zinc finger protein 883 (379 aa).

13 consecutive C2H2-type zinc fingers follow at residues 13-35 (YLCT…QKTH), 41-63 (YECK…QRIH), 69-91 (YECN…QRVH), 97-119 (YECN…ERIH), 125-147 (YPCN…HRIH), 153-175 (YECT…QGIH), 181-203 (YQCK…QRTH), 209-231 (YECN…QRIH), 237-259 (YECN…QRTH), 265-287 (YVCK…LKIH), 293-315 (YQCN…QRTH), 321-343 (YQCN…KRIH), and 349-371 (YQCT…QKTH).

This sequence belongs to the krueppel C2H2-type zinc-finger protein family.

The protein localises to the nucleus. Its function is as follows. May be involved in transcriptional regulation. The chain is Zinc finger protein 883 (ZNF883) from Homo sapiens (Human).